The chain runs to 95 residues: Aspartyl/glutamyl-tRNA(Asn/Gln) amidotransferase subunit C (95 aa).

This sequence belongs to the GatC family. Heterotrimer of A, B and C subunits.

The catalysed reaction is L-glutamyl-tRNA(Gln) + L-glutamine + ATP + H2O = L-glutaminyl-tRNA(Gln) + L-glutamate + ADP + phosphate + H(+). The enzyme catalyses L-aspartyl-tRNA(Asn) + L-glutamine + ATP + H2O = L-asparaginyl-tRNA(Asn) + L-glutamate + ADP + phosphate + 2 H(+). In terms of biological role, allows the formation of correctly charged Asn-tRNA(Asn) or Gln-tRNA(Gln) through the transamidation of misacylated Asp-tRNA(Asn) or Glu-tRNA(Gln) in organisms which lack either or both of asparaginyl-tRNA or glutaminyl-tRNA synthetases. The reaction takes place in the presence of glutamine and ATP through an activated phospho-Asp-tRNA(Asn) or phospho-Glu-tRNA(Gln). This chain is Aspartyl/glutamyl-tRNA(Asn/Gln) amidotransferase subunit C, found in Alcanivorax borkumensis (strain ATCC 700651 / DSM 11573 / NCIMB 13689 / SK2).